A 282-amino-acid polypeptide reads, in one-letter code: MTDRYAVFGNPISHSKSPFIHGQFAAPTQESLTYEAILAPVDGFEASLTAFFNAGGKGANVTVPFKEQAFALCDSISPEAKLAGAVNTLSLLADGTIRGDNTDGLGLVADLIANLGSLQDQRVLLIGAGGAARGCILPLLNAEIAQLTISNRTHTKAQLLVDIFTSVDNGAYASKVTAVEMSELAGEFDIIINSTSASLAGELPPLPAHIITTQTVCYDMMYGASVTAFNQWALSQGAAKAIDGLGMLVGQAAKSFTLWRGVEPDTQVVLTLLRDKLMAEPK.

Residues 15-17 and Thr-62 each bind shikimate; that span reads SKS. Lys-66 acts as the Proton acceptor in catalysis. 2 residues coordinate shikimate: Asn-87 and Asp-103. NADP(+) is bound by residues 127-131, 151-156, and Met-220; these read GAGGA and NRTHTK. Tyr-222 lines the shikimate pocket. Gly-244 lines the NADP(+) pocket.

The protein belongs to the shikimate dehydrogenase family. In terms of assembly, homodimer.

The enzyme catalyses shikimate + NADP(+) = 3-dehydroshikimate + NADPH + H(+). Its pathway is metabolic intermediate biosynthesis; chorismate biosynthesis; chorismate from D-erythrose 4-phosphate and phosphoenolpyruvate: step 4/7. In terms of biological role, involved in the biosynthesis of the chorismate, which leads to the biosynthesis of aromatic amino acids. Catalyzes the reversible NADPH linked reduction of 3-dehydroshikimate (DHSA) to yield shikimate (SA). The polypeptide is Shikimate dehydrogenase (NADP(+)) (Shewanella baltica (strain OS195)).